The following is a 109-amino-acid chain: Aquaporin-2 (109 aa).

The Cytoplasmic segment spans residues 1–6; that stretch reads SVAFSR. A helical membrane pass occupies residues 7–27; it reads AVFAEFLATLLFVFFGLGSAL. The Extracellular segment spans residues 28–35; sequence NWPQALPS. A helical membrane pass occupies residues 36–54; it reads VLQIAMAFGLGIGTLVQAL. Residues 55–59 are Cytoplasmic-facing; sequence GHVSG. Positions 60-69 form an intramembrane region, discontinuously helical; it reads AHINPAVTVA. The NPA 1 motif lies at 63–65; the sequence is NPA. Residues 70–80 are Cytoplasmic-facing; the sequence is CLVGCHVSFLR. The helical transmembrane segment at 81 to 102 threads the bilayer; the sequence is AAFYVAAQLLGAVAGAALLHEI. Residues 103 to 109 lie on the Extracellular side of the membrane; sequence TPPHVRG.

The protein belongs to the MIP/aquaporin (TC 1.A.8) family. In terms of assembly, homotetramer. Serine phosphorylation is necessary and sufficient for expression at the apical membrane. Endocytosis is not phosphorylation-dependent. In terms of processing, N-glycosylated.

Its subcellular location is the apical cell membrane. It localises to the basolateral cell membrane. The protein resides in the cell membrane. It is found in the cytoplasmic vesicle membrane. The protein localises to the golgi apparatus. Its subcellular location is the trans-Golgi network membrane. It catalyses the reaction H2O(in) = H2O(out). The catalysed reaction is glycerol(in) = glycerol(out). Its function is as follows. Forms a water-specific channel that provides the plasma membranes of renal collecting duct with high permeability to water, thereby permitting water to move in the direction of an osmotic gradient. Plays an essential role in renal water homeostasis. Could also be permeable to glycerol. This is Aquaporin-2 from Canis lupus familiaris (Dog).